A 722-amino-acid chain; its full sequence is Glycine--tRNA ligase beta subunit (722 aa).

The protein belongs to the class-II aminoacyl-tRNA synthetase family. In terms of assembly, tetramer of two alpha and two beta subunits.

It is found in the cytoplasm. It catalyses the reaction tRNA(Gly) + glycine + ATP = glycyl-tRNA(Gly) + AMP + diphosphate. The sequence is that of Glycine--tRNA ligase beta subunit (glyS) from Synechocystis sp. (strain ATCC 27184 / PCC 6803 / Kazusa).